Here is a 411-residue protein sequence, read N- to C-terminus: Serine hydroxymethyltransferase (411 aa).

Residue 120–122 (GHL) participates in (6S)-5,6,7,8-tetrahydrofolate binding. K225 bears the N6-(pyridoxal phosphate)lysine mark. Position 350–352 (350–352 (SPF)) interacts with (6S)-5,6,7,8-tetrahydrofolate.

It belongs to the SHMT family. In terms of assembly, homodimer. Requires pyridoxal 5'-phosphate as cofactor.

The protein localises to the cytoplasm. It catalyses the reaction (6R)-5,10-methylene-5,6,7,8-tetrahydrofolate + glycine + H2O = (6S)-5,6,7,8-tetrahydrofolate + L-serine. It participates in one-carbon metabolism; tetrahydrofolate interconversion. Its pathway is amino-acid biosynthesis; glycine biosynthesis; glycine from L-serine: step 1/1. Catalyzes the reversible interconversion of serine and glycine with tetrahydrofolate (THF) serving as the one-carbon carrier. This reaction serves as the major source of one-carbon groups required for the biosynthesis of purines, thymidylate, methionine, and other important biomolecules. Also exhibits THF-independent aldolase activity toward beta-hydroxyamino acids, producing glycine and aldehydes, via a retro-aldol mechanism. In Limosilactobacillus reuteri (strain DSM 20016) (Lactobacillus reuteri), this protein is Serine hydroxymethyltransferase.